The chain runs to 321 residues: Nucleotide-binding protein LI0459 (321 aa).

41–48 (GMSGAGKS) provides a ligand contact to ATP.

It belongs to the RapZ-like family.

In terms of biological role, displays ATPase and GTPase activities. This chain is Nucleotide-binding protein LI0459, found in Lawsonia intracellularis (strain PHE/MN1-00).